The following is a 273-amino-acid chain: Shikimate dehydrogenase (NADP(+)) (273 aa).

Shikimate contacts are provided by residues 15-17 and T62; that span reads SKS. The active-site Proton acceptor is the K66. E78 contributes to the NADP(+) binding site. Positions 87 and 103 each coordinate shikimate. Residues 127–131, 151–156, and M214 contribute to the NADP(+) site; these read GAGGA and NRTHDK. Y216 serves as a coordination point for shikimate. NADP(+) is bound at residue G238.

The protein belongs to the shikimate dehydrogenase family. As to quaternary structure, homodimer.

The enzyme catalyses shikimate + NADP(+) = 3-dehydroshikimate + NADPH + H(+). Its pathway is metabolic intermediate biosynthesis; chorismate biosynthesis; chorismate from D-erythrose 4-phosphate and phosphoenolpyruvate: step 4/7. Functionally, involved in the biosynthesis of the chorismate, which leads to the biosynthesis of aromatic amino acids. Catalyzes the reversible NADPH linked reduction of 3-dehydroshikimate (DHSA) to yield shikimate (SA). The sequence is that of Shikimate dehydrogenase (NADP(+)) from Shewanella denitrificans (strain OS217 / ATCC BAA-1090 / DSM 15013).